We begin with the raw amino-acid sequence, 337 residues long: Glyceraldehyde-3-phosphate dehydrogenase 3, cytosolic (337 aa).

NAD(+) contacts are provided by residues 13-14 (RI), Asp-35, and Arg-82. D-glyceraldehyde 3-phosphate is bound by residues 153–155 (SCT), Thr-184, 213–214 (TG), and Arg-236. Cys-154 (nucleophile) is an active-site residue. Asn-318 lines the NAD(+) pocket.

It belongs to the glyceraldehyde-3-phosphate dehydrogenase family. Homotetramer.

It is found in the cytoplasm. It carries out the reaction D-glyceraldehyde 3-phosphate + phosphate + NAD(+) = (2R)-3-phospho-glyceroyl phosphate + NADH + H(+). Its pathway is carbohydrate degradation; glycolysis; pyruvate from D-glyceraldehyde 3-phosphate: step 1/5. Its function is as follows. Key enzyme in glycolysis that catalyzes the first step of the pathway by converting D-glyceraldehyde 3-phosphate (G3P) into 3-phospho-D-glyceroyl phosphate. Essential for the maintenance of cellular ATP levels and carbohydrate metabolism. This Oryza sativa subsp. japonica (Rice) protein is Glyceraldehyde-3-phosphate dehydrogenase 3, cytosolic (GAPC3).